The chain runs to 708 residues: Radial spoke head protein 6 homolog A (708 aa).

4 disordered regions span residues 1-94 (MGEP…GYTP), 376-407 (ETHG…IIPK), 495-514 (EEEG…FEEN), and 663-708 (GPEI…DLED). Residues 10–32 (PSQTRRASQGSERARSQEYSQPL) show a composition bias toward polar residues. Over residues 47-56 (RGSRSSQGSQ) the composition is skewed to low complexity. Over residues 495 to 504 (EEEGDEEEEG) the composition is skewed to acidic residues. Low complexity predominate over residues 680-690 (LKAAQEQALAA). A compositionally biased stretch (acidic residues) spans 691-708 (AEEEEEDEEEEEDEDLED).

This sequence belongs to the flagellar radial spoke RSP4/6 family. Component of the axonemal radial spoke 1 (RS1) and 2 (RS2) complexes, at least composed of spoke head proteins RSPH1, RSPH3, RSPH9 and the cilia-specific component RSPH4A or sperm-specific component RSPH6A, spoke stalk proteins RSPH14, DNAJB13, DYDC1, ROPN1L and NME5, and the RS1 complex-specific anchor protein IQUB. Interacts with RSPH1. Interacts with RSPH3B. Interacts with RSPH4A. Interacts with RSPH9. Interacts with RSPH10B. Phosphorylated by PKA. Phosphorylation increases in capacitated sperm. Expressed in sperm and testis (at protein level).

The protein resides in the cytoplasm. The protein localises to the cytoskeleton. It is found in the flagellum axoneme. Its function is as follows. Functions as part of radial spoke complexes in the axoneme of sperm flagella that play an important part in motility. The triple radial spokes (RS1, RS2 and RS3) are required to modulate beating of the sperm flagellum. The protein is Radial spoke head protein 6 homolog A of Mus musculus (Mouse).